We begin with the raw amino-acid sequence, 423 residues long: 26S proteasome regulatory subunit 6B homolog (423 aa).

G207–T214 is a binding site for ATP.

This sequence belongs to the AAA ATPase family.

It localises to the cytoplasm. The protein localises to the nucleus. Its function is as follows. The 26S proteasome is involved in the ATP-dependent degradation of ubiquitinated proteins. The regulatory (or ATPase) complex confers ATP dependency and substrate specificity to the 26S complex. The polypeptide is 26S proteasome regulatory subunit 6B homolog (tbpA) (Aspergillus niger).